A 659-amino-acid chain; its full sequence is MSHKVLQIVLVLLLTLFSSTHNSNGNFLMEEAAAAGLNGYCLLTNTTKHSYGQAFNNTPVPIKNSSFSFNIIFGIVPEHKQQGSHGMAFVFSPTRGLPGASPDQYLGIFNETNNGKASNNVIAIELDIRKDEEFGDIDDNHVGININGLTSVASASAGYYDDEDGNFKKLSLISTKVMRLSIVYSHTDKQLNVTLLPAEISVPPQKSLLSLNRDLSPYFLEETYLGFTASTGSIGALYYVMQFSYEEGVIYPAWDLGVIPTLPPYPKKSYDRTRRILAVCLTLAVFTALVASGIGFVFYVRHKKVKEVLEEWEIQNGPHRFSYKELFNATKGFKEKQLLGKGGFGQVYKGMLPGSDAEIAVKRTSHDSRQGMSEFLAEISTIGRLRHPNLVRLLGYCKHKENLYLVYDFMPNGSLDRCLTRSNTNENQERLTWEQRFKIIKDVATALLHLHQEWVQVIVHRDIKPANVLLDHGMNARLGDFGLAKLYDQGFDPQTSRVAGTLGYIAPELLRTGRATTSTDVYAFGLVMLEVVCGRRLIERRAAENEAVLVDWILELWESGKLFDAAEESIRQEQNRGEIELVLKLGLLCAHHTELIRPNMSAVLQILNGVSHLPNNLLDVVRAERLRGIPETSMEVLLGLDLNSFGTMTLTNSFVSHGR.

The first 25 residues, 1–25, serve as a signal peptide directing secretion; sequence MSHKVLQIVLVLLLTLFSSTHNSNG. A legume-lectin like region spans residues 22–244; it reads NSNGNFLMEE…GALYYVMQFS (223 aa). Over 26 to 275 the chain is Extracellular; the sequence is NFLMEEAAAA…PKKSYDRTRR (250 aa). 4 N-linked (GlcNAc...) asparagine glycosylation sites follow: N45, N64, N110, and N192. A helical membrane pass occupies residues 276-296; it reads ILAVCLTLAVFTALVASGIGF. The Cytoplasmic portion of the chain corresponds to 297–659; the sequence is VFYVRHKKVK…LTNSFVSHGR (363 aa). Positions 333 to 595 constitute a Protein kinase domain; that stretch reads FKEKQLLGKG…GLLCAHHTEL (263 aa). ATP is bound by residues 339 to 347 and K362; that span reads LGKGGFGQV. D462 acts as the Proton acceptor in catalysis.

In the C-terminal section; belongs to the protein kinase superfamily. Ser/Thr protein kinase family. It in the N-terminal section; belongs to the leguminous lectin family.

It localises to the cell membrane. The catalysed reaction is L-seryl-[protein] + ATP = O-phospho-L-seryl-[protein] + ADP + H(+). It carries out the reaction L-threonyl-[protein] + ATP = O-phospho-L-threonyl-[protein] + ADP + H(+). Involved in resistance response to the pathogenic oomycetes Phytophthora infestans and Phytophthora capsici and to the pathogenic bacteria Pseudomonas syringae. This chain is L-type lectin-domain containing receptor kinase V.7, found in Arabidopsis thaliana (Mouse-ear cress).